Here is a 346-residue protein sequence, read N- to C-terminus: MLFDALLVLSFGGPEGPDQVMPFLENVTRGRGIPRERLASVAEHYLHFGGVSPINGINRALIAEIEAELGDRGETLPVYFGNRNWDPYVEDAVTAMRDDGVRRAAVFATSAWGGYSSCTQYNEDIARGRAAAGDGAPQLVKLRHYFDHPLLVEMFAESISVAAQSLPADVRDEARLVFTAHSIPVAADDRHGPNLYSRQVAYATRLVAAAAGYSEFDQVWQSRSGPPRIPWLEPDIGDHVTALAERGTKAVIICPIGFVADHIEVVWDLDSEVREQAADLGIAMARARTPNADRRYARLALDLVDELRGDRDPLRVAGVDPAPGCGYSVDGTTCADSPRCVARITG.

Ser52 and Tyr121 together coordinate Fe-coproporphyrin III. Fe(2+) is bound by residues His181 and Glu264.

The protein belongs to the ferrochelatase family.

It localises to the cytoplasm. It carries out the reaction Fe-coproporphyrin III + 2 H(+) = coproporphyrin III + Fe(2+). The protein operates within porphyrin-containing compound metabolism; protoheme biosynthesis. Involved in coproporphyrin-dependent heme b biosynthesis. Catalyzes the insertion of ferrous iron into coproporphyrin III to form Fe-coproporphyrin III. The chain is Coproporphyrin III ferrochelatase from Mycobacterium sp. (strain KMS).